The primary structure comprises 111 residues: Small ubiquitin-related modifier 3 (111 aa).

One can recognise a Ubiquitin-like domain in the interval 16–93; sequence AHVILKVKSQ…IDACRAMSGG (78 aa). A Glycyl lysine isopeptide (Gly-Lys) (interchain with K-? in acceptor proteins) cross-link involves residue G93.

The protein belongs to the ubiquitin family. SUMO subfamily. As to quaternary structure, interacts with SAE2, SCE1, SIZ1 and MMS21. Covalently attached to a number of proteins. Interacts with NPR1; this interaction promotes NPR1 phosphorylation and triggers its sumoylation and subsequent degradation.

The protein localises to the nucleus. It is found in the cytoplasm. Ubiquitin-like protein which can be covalently attached to target lysines as a monomer. Does not seem to be involved in protein degradation and may function as an antagonist of ubiquitin in the degradation process. Promotes NPR1 sumoylation to activate defense gene expression and regulate its degradation. This is Small ubiquitin-related modifier 3 from Arabidopsis thaliana (Mouse-ear cress).